The chain runs to 397 residues: MKIIDGNIASPLGFSADGLHAGFKKRKKDFGWIVSEVPASVAGVYTTNKVIAAPLIVTRESVKKAQKMQALVVNSGVANSCTGLQGMEDAYTMQKWTATKLKIAPELVGVASTGVIGDLMPMDTLQKGLSKLVVNGNSDDFAQAILTTDTKVKTVAVTEQFGRDEVTMAGVAKGSGMIHPNMATMLAFITCDAVISSETLQLALSQNVETTFNQITVDGDTSTNDMVLVLSNGCTLNKEILPDTPEFDKFSAMLHFVMQELAKKIAKDGEGATKLIEVEVINAPNSLDACMMAKSVVGSSLVKTAIFGEDPNWGRILAAVGYAGVDVPVDNIDIYLADIPVMLASSPVDFDEEDMQDVMRADTIKIIVDLHAGDSVGKAWGCDLSYDYVKINALYRT.

Substrate-binding residues include T147, K173, T184, E270, N392, and T397. Catalysis depends on T184, which acts as the Nucleophile.

Belongs to the ArgJ family. As to quaternary structure, heterotetramer of two alpha and two beta chains.

It localises to the cytoplasm. The catalysed reaction is N(2)-acetyl-L-ornithine + L-glutamate = N-acetyl-L-glutamate + L-ornithine. It catalyses the reaction L-glutamate + acetyl-CoA = N-acetyl-L-glutamate + CoA + H(+). It participates in amino-acid biosynthesis; L-arginine biosynthesis; L-ornithine and N-acetyl-L-glutamate from L-glutamate and N(2)-acetyl-L-ornithine (cyclic): step 1/1. The protein operates within amino-acid biosynthesis; L-arginine biosynthesis; N(2)-acetyl-L-ornithine from L-glutamate: step 1/4. Catalyzes two activities which are involved in the cyclic version of arginine biosynthesis: the synthesis of N-acetylglutamate from glutamate and acetyl-CoA as the acetyl donor, and of ornithine by transacetylation between N(2)-acetylornithine and glutamate. The sequence is that of Arginine biosynthesis bifunctional protein ArgJ from Streptococcus mutans serotype c (strain ATCC 700610 / UA159).